The chain runs to 186 residues: 3-hydroxyanthranilate 3,4-dioxygenase (186 aa).

Arginine 44 lines the O2 pocket. The Fe cation site is built by histidine 48, glutamate 54, and histidine 96. Glutamate 54 is a substrate binding site. Residues arginine 100 and glutamate 110 each coordinate substrate. A divalent metal cation contacts are provided by cysteine 125, cysteine 130, cysteine 164, and cysteine 167.

Belongs to the 3-HAO family. It depends on Fe(2+) as a cofactor.

It localises to the cytoplasm. The catalysed reaction is 3-hydroxyanthranilate + O2 = (2Z,4Z)-2-amino-3-carboxymuconate 6-semialdehyde. It functions in the pathway cofactor biosynthesis; NAD(+) biosynthesis; quinolinate from L-kynurenine: step 3/3. In terms of biological role, catalyzes the oxidative ring opening of 3-hydroxyanthranilate to 2-amino-3-carboxymuconate semialdehyde, which spontaneously cyclizes to quinolinate. This is 3-hydroxyanthranilate 3,4-dioxygenase from Chaetomium globosum (strain ATCC 6205 / CBS 148.51 / DSM 1962 / NBRC 6347 / NRRL 1970) (Soil fungus).